The chain runs to 181 residues: Adenylate kinase 2 (181 aa).

10–15 is a binding site for ATP; the sequence is GSGKST. Positions 30–59 are NMP; that stretch reads SMGGILREAIANATPLGIKAKPYVERGDLL. AMP is bound by residues Arg-36, 57–59, 85–88, and Gln-92; these read DLL and GYPR. The tract at residues 126-132 is LID; that stretch reads NRSLFDD. Arg-127 serves as a coordination point for ATP. Arg-140 contacts AMP. An ATP-binding site is contributed by Pro-168.

This sequence belongs to the adenylate kinase family. As to quaternary structure, monomer.

Its subcellular location is the cytoplasm. The catalysed reaction is AMP + ATP = 2 ADP. It participates in purine metabolism; AMP biosynthesis via salvage pathway; AMP from ADP: step 1/1. Its function is as follows. Catalyzes the reversible transfer of the terminal phosphate group between ATP and AMP. Plays an important role in cellular energy homeostasis and in adenine nucleotide metabolism. The chain is Adenylate kinase 2 from Synechocystis sp. (strain ATCC 27184 / PCC 6803 / Kazusa).